The chain runs to 424 residues: Serine--tRNA ligase (424 aa).

L-serine is bound at residue 230 to 232; the sequence is TAE. Residue 261 to 263 coordinates ATP; it reads RSE. Position 284 (Glu284) interacts with L-serine. ATP is bound at residue 348–351; it reads EISS. Ser384 is a binding site for L-serine.

The protein belongs to the class-II aminoacyl-tRNA synthetase family. Type-1 seryl-tRNA synthetase subfamily. In terms of assembly, homodimer. The tRNA molecule binds across the dimer.

It is found in the cytoplasm. It catalyses the reaction tRNA(Ser) + L-serine + ATP = L-seryl-tRNA(Ser) + AMP + diphosphate + H(+). The catalysed reaction is tRNA(Sec) + L-serine + ATP = L-seryl-tRNA(Sec) + AMP + diphosphate + H(+). The protein operates within aminoacyl-tRNA biosynthesis; selenocysteinyl-tRNA(Sec) biosynthesis; L-seryl-tRNA(Sec) from L-serine and tRNA(Sec): step 1/1. Its function is as follows. Catalyzes the attachment of serine to tRNA(Ser). Is also able to aminoacylate tRNA(Sec) with serine, to form the misacylated tRNA L-seryl-tRNA(Sec), which will be further converted into selenocysteinyl-tRNA(Sec). This Streptococcus pneumoniae (strain ATCC 700669 / Spain 23F-1) protein is Serine--tRNA ligase.